Consider the following 244-residue polypeptide: Orotidine 5'-phosphate decarboxylase (244 aa).

Substrate-binding positions include Asp14, Lys36, 63–72 (DLKFHDIPNT), Thr127, Arg188, Gln197, Gly217, and Arg218. The active-site Proton donor is Lys65.

This sequence belongs to the OMP decarboxylase family. Type 1 subfamily. In terms of assembly, homodimer.

The enzyme catalyses orotidine 5'-phosphate + H(+) = UMP + CO2. It functions in the pathway pyrimidine metabolism; UMP biosynthesis via de novo pathway; UMP from orotate: step 2/2. Functionally, catalyzes the decarboxylation of orotidine 5'-monophosphate (OMP) to uridine 5'-monophosphate (UMP). This chain is Orotidine 5'-phosphate decarboxylase, found in Syntrophotalea carbinolica (strain DSM 2380 / NBRC 103641 / GraBd1) (Pelobacter carbinolicus).